Reading from the N-terminus, the 435-residue chain is Elongation factor 1-alpha (435 aa).

The tr-type G domain occupies K4–V229. Residues G13–S20 are G1. G13 to S20 lines the GTP pocket. S20 contacts Mg(2+). Residues G69–N73 are G2. The G3 stretch occupies residues D90 to G93. GTP contacts are provided by residues D90 to H94 and N152 to D155. A G4 region spans residues N152–D155. Residues V193–P195 are G5.

This sequence belongs to the TRAFAC class translation factor GTPase superfamily. Classic translation factor GTPase family. EF-Tu/EF-1A subfamily.

Its subcellular location is the cytoplasm. It catalyses the reaction GTP + H2O = GDP + phosphate + H(+). Functionally, GTP hydrolase that promotes the GTP-dependent binding of aminoacyl-tRNA to the A-site of ribosomes during protein biosynthesis. The sequence is that of Elongation factor 1-alpha from Sulfurisphaera tokodaii (strain DSM 16993 / JCM 10545 / NBRC 100140 / 7) (Sulfolobus tokodaii).